The sequence spans 297 residues: tRNA pseudouridine synthase A (297 aa).

Aspartate 57 functions as the Nucleophile in the catalytic mechanism. Tyrosine 115 serves as a coordination point for substrate.

It belongs to the tRNA pseudouridine synthase TruA family. In terms of assembly, homodimer.

The enzyme catalyses uridine(38/39/40) in tRNA = pseudouridine(38/39/40) in tRNA. In terms of biological role, formation of pseudouridine at positions 38, 39 and 40 in the anticodon stem and loop of transfer RNAs. The sequence is that of tRNA pseudouridine synthase A from Nitratidesulfovibrio vulgaris (strain ATCC 29579 / DSM 644 / CCUG 34227 / NCIMB 8303 / VKM B-1760 / Hildenborough) (Desulfovibrio vulgaris).